The chain runs to 105 residues: uncharacterized protein (105 aa).

This is an uncharacterized protein from Orgyia pseudotsugata multicapsid polyhedrosis virus (OpMNPV).